The sequence spans 353 residues: Protein RecA (353 aa).

An ATP-binding site is contributed by 67-74 (GPESSGKT).

It belongs to the RecA family.

The protein localises to the cytoplasm. Can catalyze the hydrolysis of ATP in the presence of single-stranded DNA, the ATP-dependent uptake of single-stranded DNA by duplex DNA, and the ATP-dependent hybridization of homologous single-stranded DNAs. It interacts with LexA causing its activation and leading to its autocatalytic cleavage. In Salmonella paratyphi A (strain ATCC 9150 / SARB42), this protein is Protein RecA.